Reading from the N-terminus, the 339-residue chain is UPF0324 membrane protein M6_Spy0799 (339 aa).

Transmembrane regions (helical) follow at residues Lys7–Leu24, Phe28–His50, Gly57–Leu79, Ala84–Gly106, Ala118–Ile140, Ala150–Leu172, Phe256–Val275, Phe290–Leu307, and Ala314–Leu336.

This sequence belongs to the UPF0324 family.

Its subcellular location is the cell membrane. The polypeptide is UPF0324 membrane protein M6_Spy0799 (Streptococcus pyogenes serotype M6 (strain ATCC BAA-946 / MGAS10394)).